The following is a 286-amino-acid chain: Fructose-bisphosphate aldolase (286 aa).

S50 provides a ligand contact to D-glyceraldehyde 3-phosphate. The active-site Proton donor is the D85. Residues H86, D107, E137, and H181 each contribute to the Zn(2+) site. Dihydroxyacetone phosphate is bound at residue G182. H209 lines the Zn(2+) pocket. Dihydroxyacetone phosphate-binding positions include 210–212 (GGT) and 231–234 (NVNT).

It belongs to the class II fructose-bisphosphate aldolase family. Requires Zn(2+) as cofactor.

The catalysed reaction is beta-D-fructose 1,6-bisphosphate = D-glyceraldehyde 3-phosphate + dihydroxyacetone phosphate. It functions in the pathway carbohydrate degradation; glycolysis; D-glyceraldehyde 3-phosphate and glycerone phosphate from D-glucose: step 4/4. Its function is as follows. Catalyzes the aldol condensation of dihydroxyacetone phosphate (DHAP or glycerone-phosphate) with glyceraldehyde 3-phosphate (G3P) to form fructose 1,6-bisphosphate (FBP) in gluconeogenesis and the reverse reaction in glycolysis. The chain is Fructose-bisphosphate aldolase (fba) from Staphylococcus epidermidis (strain ATCC 35984 / DSM 28319 / BCRC 17069 / CCUG 31568 / BM 3577 / RP62A).